Here is a 504-residue protein sequence, read N- to C-terminus: Glucose-6-phosphate isomerase (504 aa).

The active-site Proton donor is the Glu333. Residues His364 and Lys473 contribute to the active site.

Belongs to the GPI family.

Its subcellular location is the cytoplasm. It carries out the reaction alpha-D-glucose 6-phosphate = beta-D-fructose 6-phosphate. It participates in carbohydrate biosynthesis; gluconeogenesis. The protein operates within carbohydrate degradation; glycolysis; D-glyceraldehyde 3-phosphate and glycerone phosphate from D-glucose: step 2/4. Functionally, catalyzes the reversible isomerization of glucose-6-phosphate to fructose-6-phosphate. The polypeptide is Glucose-6-phosphate isomerase (Xanthomonas axonopodis pv. citri (strain 306)).